The sequence spans 77 residues: MPKRVLQGVVISSKTDKTVTVKVERRFKHPIYKKFIKVSKKYAAHDPNNKFQEGDKVNIIESRPISKTKTWVVINEE.

The protein belongs to the universal ribosomal protein uS17 family. In terms of assembly, part of the 30S ribosomal subunit.

One of the primary rRNA binding proteins, it binds specifically to the 5'-end of 16S ribosomal RNA. This Rickettsia bellii (strain OSU 85-389) protein is Small ribosomal subunit protein uS17.